The primary structure comprises 314 residues: 4-hydroxy-3-methylbut-2-enyl diphosphate reductase (314 aa).

[4Fe-4S] cluster is bound at residue cysteine 12. Residues histidine 41 and histidine 74 each contribute to the (2E)-4-hydroxy-3-methylbut-2-enyl diphosphate site. Dimethylallyl diphosphate-binding residues include histidine 41 and histidine 74. Residues histidine 41 and histidine 74 each coordinate isopentenyl diphosphate. Cysteine 96 serves as a coordination point for [4Fe-4S] cluster. Histidine 124 provides a ligand contact to (2E)-4-hydroxy-3-methylbut-2-enyl diphosphate. Histidine 124 provides a ligand contact to dimethylallyl diphosphate. Isopentenyl diphosphate is bound at residue histidine 124. Glutamate 126 functions as the Proton donor in the catalytic mechanism. Threonine 167 lines the (2E)-4-hydroxy-3-methylbut-2-enyl diphosphate pocket. Cysteine 197 is a binding site for [4Fe-4S] cluster. Positions 225, 226, 227, and 269 each coordinate (2E)-4-hydroxy-3-methylbut-2-enyl diphosphate. Residues serine 225, serine 226, asparagine 227, and serine 269 each coordinate dimethylallyl diphosphate. The isopentenyl diphosphate site is built by serine 225, serine 226, asparagine 227, and serine 269.

This sequence belongs to the IspH family. Requires [4Fe-4S] cluster as cofactor.

It catalyses the reaction isopentenyl diphosphate + 2 oxidized [2Fe-2S]-[ferredoxin] + H2O = (2E)-4-hydroxy-3-methylbut-2-enyl diphosphate + 2 reduced [2Fe-2S]-[ferredoxin] + 2 H(+). The catalysed reaction is dimethylallyl diphosphate + 2 oxidized [2Fe-2S]-[ferredoxin] + H2O = (2E)-4-hydroxy-3-methylbut-2-enyl diphosphate + 2 reduced [2Fe-2S]-[ferredoxin] + 2 H(+). It functions in the pathway isoprenoid biosynthesis; dimethylallyl diphosphate biosynthesis; dimethylallyl diphosphate from (2E)-4-hydroxy-3-methylbutenyl diphosphate: step 1/1. Its pathway is isoprenoid biosynthesis; isopentenyl diphosphate biosynthesis via DXP pathway; isopentenyl diphosphate from 1-deoxy-D-xylulose 5-phosphate: step 6/6. Catalyzes the conversion of 1-hydroxy-2-methyl-2-(E)-butenyl 4-diphosphate (HMBPP) into a mixture of isopentenyl diphosphate (IPP) and dimethylallyl diphosphate (DMAPP). Acts in the terminal step of the DOXP/MEP pathway for isoprenoid precursor biosynthesis. This chain is 4-hydroxy-3-methylbut-2-enyl diphosphate reductase, found in Haemophilus influenzae (strain PittEE).